The following is a 526-amino-acid chain: Phosphoenolpyruvate carboxylase (526 aa).

It belongs to the PEPCase type 2 family. Homotetramer. The cofactor is Mg(2+).

It carries out the reaction oxaloacetate + phosphate = phosphoenolpyruvate + hydrogencarbonate. Its function is as follows. Catalyzes the irreversible beta-carboxylation of phosphoenolpyruvate (PEP) to form oxaloacetate (OAA), a four-carbon dicarboxylic acid source for the tricarboxylic acid cycle. This is Phosphoenolpyruvate carboxylase from Methanosarcina barkeri (strain Fusaro / DSM 804).